The chain runs to 151 residues: Proline-rich acidic protein 1 (151 aa).

The signal sequence occupies residues 1–20; the sequence is MRRLLLVTSLVVVLLWEAGA. A disordered region spans residues 71-151; that stretch reads LTTEEKPRGQ…EDQDHIYHPQ (81 aa).

In terms of assembly, interacts with isoform 1 and isoform 3 of MAD1L1. Interacts with MTTP. Highly expressed in the intestinal epithelial cells (at protein level). Abundantly expressed in the epithelial cells of the liver, kidney and cervix. Significantly down-regulated in hepatocellular carcinoma and right colon adenocarcinoma compared with the respective adjacent normal tissues. Expressed in epididymis (at protein level).

The protein resides in the secreted. It is found in the endoplasmic reticulum. Its function is as follows. Lipid-binding protein which promotes lipid absorption by facilitating MTTP-mediated lipid transfer (mainly triglycerides and phospholipids) and MTTP-mediated apoB lipoprotein assembly and secretion. Protects the gastrointestinal epithelium from irradiation-induced apoptosis. May play an important role in maintaining normal growth homeostasis in epithelial cells. Involved in p53/TP53-dependent cell survival after DNA damage. May down-regulate the expression of MAD1L1 and exert a suppressive role in mitotic spindle assembly checkpoint in hepatocellular carcinomas. This chain is Proline-rich acidic protein 1 (PRAP1), found in Homo sapiens (Human).